Here is a 496-residue protein sequence, read N- to C-terminus: Cobyric acid synthase (496 aa).

The GATase cobBQ-type domain maps to 252–442 (DLAVAVIRLP…LHGCFDSDTY (191 aa)). The active-site Nucleophile is C333. The active site involves H434.

This sequence belongs to the CobB/CobQ family. CobQ subfamily.

It functions in the pathway cofactor biosynthesis; adenosylcobalamin biosynthesis. In terms of biological role, catalyzes amidations at positions B, D, E, and G on adenosylcobyrinic A,C-diamide. NH(2) groups are provided by glutamine, and one molecule of ATP is hydrogenolyzed for each amidation. In Desulforudis audaxviator (strain MP104C), this protein is Cobyric acid synthase.